The following is a 285-amino-acid chain: Formate channel FocA (285 aa).

Residues 1–30 (MKADNPFDLLLPAAMAKVAEEAGVYKATKH) lie on the Cytoplasmic side of the membrane. The chain crosses the membrane as a helical span at residues 31 to 56 (PLKTFYLAITAGVFISIAFVFYITAT). The Periplasmic portion of the chain corresponds to 57–64 (TGTGTMPF). The chain crosses the membrane as a helical span at residues 65–85 (GMAKLVGGICFSLGLILCVVC). The Cytoplasmic portion of the chain corresponds to 86–112 (GADLFTSTVLIVVAKASGRITWGQLAK). The chain crosses the membrane as a helical span at residues 113-135 (NWLNVYFGNLVGALLFVLLMWLS). The Periplasmic portion of the chain corresponds to 136-160 (GEYMTANGQWGLNVLQTADHKVHHT). Residues 161–181 (FIEAVCLGILANLMVCLAVWM) traverse the membrane as a helical segment. Residues 182 to 187 (SYSGRS) are Cytoplasmic-facing. The chain crosses the membrane as a helical span at residues 188 to 205 (LMDKAFIMVLPVAMFVAS). Residues 206–249 (GFEHSIANMFMIPMGIVIRDFASPEFWTAVGSAPENFSHLTVMN) lie on the Periplasmic side of the membrane. Residues 250-276 (FITDNLIPVTIGNIIGGGLLVGLTYWV) traverse the membrane as a helical segment. Topologically, residues 277–285 (IYLRENDHH) are cytoplasmic.

The protein belongs to the FNT transporter (TC 1.A.16) family. In terms of assembly, homopentamer.

The protein localises to the cell inner membrane. The enzyme catalyses formate(in) = formate(out). Functionally, involved in the bidirectional transport of formate during mixed-acid fermentation. Functions to maintain relatively constant intracellular formate levels during growth, using different mechanisms for efflux and uptake of the anion. Is impermeable to water. In Escherichia coli O157:H7, this protein is Formate channel FocA.